The sequence spans 206 residues: Large ribosomal subunit protein eL13z (206 aa).

The segment at 185-206 (TNKRHAGARAKRAAEAEKEEKK) is disordered. Residues 186-195 (NKRHAGARAK) are compositionally biased toward basic residues. The segment covering 196 to 206 (RAAEAEKEEKK) has biased composition (basic and acidic residues).

It belongs to the eukaryotic ribosomal protein eL13 family.

Its subcellular location is the cytoplasm. The sequence is that of Large ribosomal subunit protein eL13z (RPL13B) from Arabidopsis thaliana (Mouse-ear cress).